Consider the following 232-residue polypeptide: Rhamnogalacturonan acetylesterase RhgT (232 aa).

Serine 14 acts as the Nucleophile in catalysis. Active-site residues include glutamate 191 and histidine 195.

This sequence belongs to the 'GDSL' lipolytic enzyme family. Monomer.

Its activity is regulated as follows. Almost completely inhibited by diethylpyrocarbonate at 5 mM and completely inhibited by phenylmethylsulfonyl fluoride (PMSF) at 50 mM. Dimethyl phosphite achieves only a 53% inhibition. Also inhibited by metal ions (magnesium, manganese and calcium) and chelating agent (EDTA) at the same level. Functionally, may play a role in the degradation of type I rhamnogalacturonan derived from plant cell walls. This enzyme has a broad substrate specificity, and shows strong preference for glucose pentaacetate, beta-naphthylacetate, and p-nitrophenyl acetate (pNPA). Also active toward acetylated xylan. The chain is Rhamnogalacturonan acetylesterase RhgT (rhgT) from Bacillus subtilis (strain 168).